Here is a 437-residue protein sequence, read N- to C-terminus: Vacuolar protein sorting-associated protein 4A (437 aa).

The interaction with CHMP1B stretch occupies residues 1–84 (MTTSTLQKAI…RSKEKHGKKP (84 aa)). The MIT domain maps to 2–80 (TTSTLQKAID…KDYLRSKEKH (79 aa)). Lys8 is modified (N6-acetyllysine). The disordered stretch occupies residues 75–106 (RSKEKHGKKPVKENQSEGKGSDSDSEGDNPEK). Residues 84–96 (PVKENQSEGKGSD) are compositionally biased toward basic and acidic residues. Phosphoserine is present on residues Ser95 and Ser97. 167 to 174 (GPPGTGKS) provides a ligand contact to ATP.

Belongs to the AAA ATPase family. Proposed to be monomeric or homodimeric in nucleotide-free form and to oligomerize upon binding to ATP to form two stacked hexameric or heptameric rings with a central pore through which ESCRT-III substrates are translocated in an ATP-dependent manner. Interacts with CHMP1A, CHMP1B, CHMP2A, CHMP2B, CHMP3, CHMP4A, CHMP4B, CHMP4C and CHMP6. Interacts with VPS4B; the interaction suggests a heteromeric assembly with VPS4B. Interacts with SPAST. Interacts with IST1. Interacts with ZFYVE19/ANCHR; leading to retain it at midbody. In terms of tissue distribution, ubiquitously expressed.

Its subcellular location is the late endosome membrane. It localises to the midbody. The protein resides in the cytoplasm. It is found in the cytoskeleton. The protein localises to the spindle. It catalyses the reaction ATP + H2O = ADP + phosphate + H(+). Involved in late steps of the endosomal multivesicular bodies (MVB) pathway. Recognizes membrane-associated ESCRT-III assemblies and catalyzes their disassembly, possibly in combination with membrane fission. Redistributes the ESCRT-III components to the cytoplasm for further rounds of MVB sorting. MVBs contain intraluminal vesicles (ILVs) that are generated by invagination and scission from the limiting membrane of the endosome and mostly are delivered to lysosomes enabling degradation of membrane proteins, such as stimulated growth factor receptors, lysosomal enzymes and lipids. It is required for proper accomplishment of various processes including the regulation of endosome size, primary cilium organization, mitotic spindle organization, chromosome segregation, and nuclear envelope sealing and spindle disassembly during anaphase. Involved in cytokinesis: retained at the midbody by ZFYVE19/ANCHR and CHMP4C until abscission checkpoint signaling is terminated at late cytokinesis. It is then released following dephosphorylation of CHMP4C, leading to abscission. VPS4A/B are required for the exosomal release of SDCBP, CD63 and syndecan. Critical for normal erythroblast cytokinesis and correct erythropoiesis. In terms of biological role, (Microbial infection) In conjunction with the ESCRT machinery also appears to function in topologically equivalent membrane fission events, such as the terminal stages of cytokinesis and enveloped virus budding (HIV-1 and other lentiviruses). This chain is Vacuolar protein sorting-associated protein 4A, found in Homo sapiens (Human).